The following is a 207-amino-acid chain: Zinc finger protein JAGGED-like (207 aa).

Residues 1-16 (MRADENNTLDLNNLPD) are compositionally biased toward low complexity. Positions 1–20 (MRADENNTLDLNNLPDDPSR) are disordered. The C2H2-type zinc finger occupies 50–72 (YECRFCSLKFFKSQALGGHMNRH).

Expressed in the emerging leaf, stamen and carpel primordia. Not expressed in the apical shoot meristem (SAM).

Its subcellular location is the nucleus. Acts with JAG to promote growth and patterning in stamens and carpels. Promotes the growth of the abaxial and adaxial sides of floral organs. Promotes the growth of the pollen-bearing microsporangia in anthers, the carpel walls of the gynoecium and the establishment of the correct number of cell layers in carpel walls. Promotes leaf blade growth and trichome development. The sequence is that of Zinc finger protein JAGGED-like (JGL) from Arabidopsis thaliana (Mouse-ear cress).